Reading from the N-terminus, the 346-residue chain is Phosphoribosylformylglycinamidine cyclo-ligase (346 aa).

Belongs to the AIR synthase family.

The protein localises to the cytoplasm. It carries out the reaction 2-formamido-N(1)-(5-O-phospho-beta-D-ribosyl)acetamidine + ATP = 5-amino-1-(5-phospho-beta-D-ribosyl)imidazole + ADP + phosphate + H(+). It functions in the pathway purine metabolism; IMP biosynthesis via de novo pathway; 5-amino-1-(5-phospho-D-ribosyl)imidazole from N(2)-formyl-N(1)-(5-phospho-D-ribosyl)glycinamide: step 2/2. In Vibrio atlanticus (strain LGP32) (Vibrio splendidus (strain Mel32)), this protein is Phosphoribosylformylglycinamidine cyclo-ligase.